A 423-amino-acid chain; its full sequence is MDIDQYMTDLGRRARHASRAMARASTAAKNAALDAVARAIERDAQALKDANARDVARAREKGLDAAFIDRLTLSDNALKTMVEGLRQVASLADPIGEIGNLKYRPSGIQVGQMRVPLGVIGIIYESRPNVTIDAAALCLKSGNATILRGGSEALESNAALAKLIGEGLEAAGLPQDAVQVVATADRAAVGKLITMTDYVDVIVPRGGKSLIERLINEARVPMIKHLDGICHVYVDDRADLAKALTVCDNAKTHRYGTCNTMETLLVASGIAATLLPPLGKLYRDKQVELRVDAAARAVLAEAGVGPLVDATDEDWHTEYLAPVLAIKVVDGLDAAIEHINHYGSHHTDAIVTEDHDRAMRFLREVDSASVMVNASTRFADGFEFGLGAEIGISNDKLHARGPVGLEGLTSLKYVVLGHGEGRQ.

The protein belongs to the gamma-glutamyl phosphate reductase family.

It is found in the cytoplasm. It carries out the reaction L-glutamate 5-semialdehyde + phosphate + NADP(+) = L-glutamyl 5-phosphate + NADPH + H(+). Its pathway is amino-acid biosynthesis; L-proline biosynthesis; L-glutamate 5-semialdehyde from L-glutamate: step 2/2. In terms of biological role, catalyzes the NADPH-dependent reduction of L-glutamate 5-phosphate into L-glutamate 5-semialdehyde and phosphate. The product spontaneously undergoes cyclization to form 1-pyrroline-5-carboxylate. This chain is Gamma-glutamyl phosphate reductase, found in Burkholderia ambifaria (strain ATCC BAA-244 / DSM 16087 / CCUG 44356 / LMG 19182 / AMMD) (Burkholderia cepacia (strain AMMD)).